A 102-amino-acid chain; its full sequence is uncharacterized protein (102 aa).

Helical transmembrane passes span 24–44 and 55–75; these read AFIV…PVLT and IGAV…TWIL.

It is found in the cell membrane. This is an uncharacterized protein from Bacillus subtilis (strain 168).